A 793-amino-acid polypeptide reads, in one-letter code: Short transient receptor potential channel 1 (793 aa).

Positions 1-30 (MMAALYPSTDLSGASSSSLPSSPSSSSPNE) are disordered. At 1 to 345 (MMAALYPSTD…FGQMSGYRRK (345 aa)) the chain is on the cytoplasmic side. Residues 15 to 28 (SSSSLPSSPSSSSP) show a composition bias toward low complexity. 4 ANK repeats span residues 46 to 75 (LNEK…SGDL), 83 to 109 (LGRN…YGCQ), 111 to 156 (ADAL…EYST), and 158 to 180 (MDVA…MLLK). Residues H189, C193, C195, and C198 each coordinate Zn(2+). An intramembrane region (discontinuously helical) is located at residues 346–379 (PTCKKIMTVLTVGIFWPVLSLCYLIAPKSQFGRI). Over 380–386 (IHTPFMK) the chain is Cytoplasmic. The chain crosses the membrane as a helical span at residues 387-404 (FIIHGASYFTFLLLLNLY). Topologically, residues 405–422 (SLVYNEDKKNTMGPALER) are extracellular. The chain crosses the membrane as a helical span at residues 423-439 (IDYLLILWIIGMIWSDI). The Cytoplasmic portion of the chain corresponds to 440 to 455 (KRLWYEGLEDFLEESR). A helical membrane pass occupies residues 456 to 475 (NQLSFVMNSLYLATFALKVV). Residues 476-496 (AHNKFHDFADRKDWDAFHPTL) lie on the Extracellular side of the membrane. A helical membrane pass occupies residues 497-517 (VAEGLFAFANVLSYLRLFFMY). Over 518–536 (TTSSILGPLQISMGQMLQD) the chain is Cytoplasmic. A helical membrane pass occupies residues 537 to 558 (FGKFLGMFLLVLFSFTIGLTQL). Residues 559–623 (YDKGYTSKEQ…GEELQSFVGA (65 aa)) are Extracellular-facing. A disulfide bridge connects residues C571 and C576. A helical membrane pass occupies residues 624–644 (VIVGTYNVVVVIVLTKLLVAM). The Cytoplasmic portion of the chain corresponds to 645 to 793 (LHKSFQLIAN…SKYAMFYPRN (149 aa)).

The protein belongs to the transient receptor (TC 1.A.4) family. STrpC subfamily. TRPC1 sub-subfamily. In terms of assembly, heterotetramer with TRPC4 and/or TRPC5. Forms a heteromeric ion channel with TRPC4, with a 1:3 TRPC1:TRPC4 stoichiometry. Unlike other TRP channel proteins, does not form a homomeric channel. Interacts with TRPC4AP. Interacts with ITPR3. Interacts with MX1 and RNF24. Interacts with FKBP4. Interacts with PLSCR1. Interacts with PKD2L2. Forms a heterotetramer with PKD2 with a 2:2 stoichiometry; has distinct channel properties separate from PKD2 or TRPC1 homomers alone. As to quaternary structure, interacts with isoform 2 of TRPC3. Post-translationally, activation of PRKCA induces phosphorylation of TRPC1 and subsequent Ca2+ entry into cells. In terms of tissue distribution, seems to be ubiquitous.

Its subcellular location is the cell membrane. The catalysed reaction is Ca(2+)(in) = Ca(2+)(out). It carries out the reaction Na(+)(in) = Na(+)(out). It catalyses the reaction Li(+)(in) = Li(+)(out). The enzyme catalyses Cs(+)(in) = Cs(+)(out). Its activity is regulated as follows. May be operated by a phosphatidylinositol second messenger system activated by receptor tyrosine kinases or G-protein coupled receptors. Also activated by intracellular calcium store depletion. Inhibited by xanthine-based inhibitor Pico145. Forms a receptor-activated non-selective calcium permeant cation channel. Forms a heteromeric ion channel with TRPC4 or TRPC5 that has reduced calcium permeability compared to the homomeric TRPC4 or TRPC5 channel. Also permeable to monovalent ions including sodium, lithium and cesium ions. Its function is as follows. Forms a receptor-activated non-selective calcium permeant cation channel. Also activated by intracellular calcium store depletion. The polypeptide is Short transient receptor potential channel 1 (TRPC1) (Homo sapiens (Human)).